Here is a 117-residue protein sequence, read N- to C-terminus: Anti-sigma F factor antagonist (117 aa).

Residues 2-115 enclose the STAS domain; it reads HFQLEMVTRE…QAIDRVRGIV (114 aa). Ser-58 is subject to Phosphoserine.

Belongs to the anti-sigma-factor antagonist family. Post-translationally, phosphorylated by SpoIIAB on a serine residue.

In the phosphorylated form it could act as an anti-anti-sigma factor that counteracts SpoIIAB and thus releases sigma f from inhibition. This is Anti-sigma F factor antagonist (spoIIAA) from Lysinibacillus sphaericus (Bacillus sphaericus).